The sequence spans 308 residues: 1-acyl-sn-glycerol-3-phosphate acyltransferase (308 aa).

3 consecutive transmembrane segments (helical) span residues 65–85 (FLSM…LLPW), 124–144 (AIYI…WLIP), and 148–168 (VTIA…YVLA). Residues 130–135 (HASLVD) carry the HXXXXD motif motif.

It belongs to the 1-acyl-sn-glycerol-3-phosphate acyltransferase family.

Its subcellular location is the membrane. The enzyme catalyses a 1-acyl-sn-glycero-3-phosphate + an acyl-CoA = a 1,2-diacyl-sn-glycero-3-phosphate + CoA. Converts lysophosphatidic acid (LPA) into phosphatidic acid by incorporating acyl moiety at the 2 position. This enzyme shows a preference for medium-chain-length fatty acyl-coenzyme a substrates. This Cocos nucifera (Coconut palm) protein is 1-acyl-sn-glycerol-3-phosphate acyltransferase.